The sequence spans 183 residues: Troponin I, fast skeletal muscle (183 aa).

Residue S2 is modified to N-acetylserine. The segment at 2 to 48 (SDEEKKRRAATARRQHLKSAMLQLAVTEIEKEAAAKEVEKQNYLAEH) is involved in binding TNC. Residues 97 to 117 (SQKLFDLRGKFKRPPLRRVRM) form an involved in binding TNC and actin region.

The protein belongs to the troponin I family. Binds to actin and tropomyosin. The N-terminus is blocked.

Functionally, troponin I is the inhibitory subunit of troponin, the thin filament regulatory complex which confers calcium-sensitivity to striated muscle actomyosin ATPase activity. This Gallus gallus (Chicken) protein is Troponin I, fast skeletal muscle (TNNI2).